We begin with the raw amino-acid sequence, 255 residues long: Tachylectin-2 (255 aa).

An N-terminal signal peptide occupies residues 1–19; sequence MKFLLVVLGFIGFLKDGIT. WD repeat units lie at residues 20–67, 68–114, 115–161, 162–208, and 209–255; these read VGGE…FLFL, SPGG…FLFF, DPNG…FLFF, HPNG…FLFF, and SSVG…FLFF.

Monomer.

The protein resides in the secreted. It localises to the cytoplasmic granule. Functionally, lectin that binds specifically to N-acetylglucosamine and N-acetylgalactosamine. Is part of the innate immunity host defense system of the horseshoe crab. The polypeptide is Tachylectin-2 (Tachypleus tridentatus (Japanese horseshoe crab)).